Reading from the N-terminus, the 229-residue chain is Large ribosomal subunit protein uL1 (229 aa).

It belongs to the universal ribosomal protein uL1 family. As to quaternary structure, part of the 50S ribosomal subunit.

In terms of biological role, binds directly to 23S rRNA. The L1 stalk is quite mobile in the ribosome, and is involved in E site tRNA release. Protein L1 is also a translational repressor protein, it controls the translation of the L11 operon by binding to its mRNA. This Haemophilus ducreyi (strain 35000HP / ATCC 700724) protein is Large ribosomal subunit protein uL1.